A 546-amino-acid polypeptide reads, in one-letter code: Chaperonin GroEL (546 aa).

Residues 30–33 (TLGP), Lys-51, 87–91 (DGTTT), Gly-415, 479–481 (NAA), and Asp-495 contribute to the ATP site. The tract at residues 526–546 (KEDAPMPGGMPGGMGGMGMDM) is disordered. Residues 534-546 (GMPGGMGGMGMDM) are compositionally biased toward gly residues.

Belongs to the chaperonin (HSP60) family. In terms of assembly, forms a cylinder of 14 subunits composed of two heptameric rings stacked back-to-back. Interacts with the co-chaperonin GroES.

It localises to the cytoplasm. The catalysed reaction is ATP + H2O + a folded polypeptide = ADP + phosphate + an unfolded polypeptide.. In terms of biological role, together with its co-chaperonin GroES, plays an essential role in assisting protein folding. The GroEL-GroES system forms a nano-cage that allows encapsulation of the non-native substrate proteins and provides a physical environment optimized to promote and accelerate protein folding. This Burkholderia thailandensis protein is Chaperonin GroEL.